A 476-amino-acid polypeptide reads, in one-letter code: Cysteine--tRNA ligase (476 aa).

Cys-28 contacts Zn(2+). Residues 30–40 (VTTYDFCHIGH) carry the 'HIGH' region motif. 3 residues coordinate Zn(2+): Cys-215, His-241, and Glu-245. Positions 273–277 (KMSKS) match the 'KMSKS' region motif. Lys-276 contributes to the ATP binding site.

This sequence belongs to the class-I aminoacyl-tRNA synthetase family. As to quaternary structure, monomer. The cofactor is Zn(2+).

It localises to the cytoplasm. The enzyme catalyses tRNA(Cys) + L-cysteine + ATP = L-cysteinyl-tRNA(Cys) + AMP + diphosphate. In Buchnera aphidicola subsp. Cinara cedri (strain Cc), this protein is Cysteine--tRNA ligase.